We begin with the raw amino-acid sequence, 115 residues long: MAKIKKGDLVVVISGNRDDRGKQGRVLEVLTDSNRVVVEGVRRVKKHTKVSQTQRGSRTGGIETIEAPIHVSNVMLVDPETKKGTRVGYRTEEVERNGRARTVRVRVAKRSGKDV.

The protein belongs to the universal ribosomal protein uL24 family. Part of the 50S ribosomal subunit.

In terms of biological role, one of two assembly initiator proteins, it binds directly to the 5'-end of the 23S rRNA, where it nucleates assembly of the 50S subunit. Functionally, one of the proteins that surrounds the polypeptide exit tunnel on the outside of the subunit. The sequence is that of Large ribosomal subunit protein uL24 from Beutenbergia cavernae (strain ATCC BAA-8 / DSM 12333 / CCUG 43141 / JCM 11478 / NBRC 16432 / NCIMB 13614 / HKI 0122).